The chain runs to 250 residues: Beta-crystallin B1 (250 aa).

The interval 1-47 is disordered; the sequence is MSQVAKAAATTAVNPGPDGKGKGTPSTGTAPAPGPTPVPASVPRPAA. Ser2 carries the N-acetylserine modification. Residues 2–56 form an N-terminal arm region; the sequence is SQVAKAAATTAVNPGPDGKGKGTPSTGTAPAPGPTPVPASVPRPAAKVGELPPGS. Residues 32–42 show a composition bias toward pro residues; the sequence is APGPTPVPASV. Beta/gamma crystallin 'Greek key' domains are found at residues 57–96 and 97–141; these read YRLVVFEQENFQGRRVEFSGECLNLGDRGFDRVRSLIVLS and GPWV…RPIR. Residues 142-146 are connecting peptide; the sequence is MDSQE. Beta/gamma crystallin 'Greek key' domains are found at residues 147-188 and 189-231; these read HKIC…TVSS and GTWV…RRLR. The C-terminal arm stretch occupies residues 233–250; sequence RQWHQEGCFPVLTAEPPK.

It belongs to the beta/gamma-crystallin family. As to quaternary structure, homo/heterodimer, or complexes of higher-order. The structure of beta-crystallin oligomers seems to be stabilized through interactions between the N-terminal arms. In terms of processing, specific cleavages in the N-terminal arm occur during lens maturation and give rise to truncated forms, leading to impaired oligomerization and protein insolubilization. The protease responsible for this partial degradation could be calpain II.

In terms of biological role, crystallins are the dominant structural components of the vertebrate eye lens. The polypeptide is Beta-crystallin B1 (Crybb1) (Rattus norvegicus (Rat)).